A 474-amino-acid polypeptide reads, in one-letter code: Gamma-aminobutyric acid receptor subunit beta-2 (474 aa).

An N-terminal signal peptide occupies residues 1–25 (MWRVRKRGYFGIWSFPLIIAAVCAQ). Topologically, residues 26 to 244 (SVNDPSNMSL…SFKLKRNIGY (219 aa)) are extracellular. Asparagine 32 and asparagine 104 each carry an N-linked (GlcNAc...) asparagine glycan. Tyrosine 121 serves as a coordination point for histamine. An intrachain disulfide couples cysteine 160 to cysteine 174. Asparagine 173 is a glycosylation site (N-linked (GlcNAc...) asparagine). Histamine-binding positions include 180-181 (SY) and threonine 226. 4-aminobutanoate contacts are provided by tyrosine 181 and threonine 226. 3 helical membrane-spanning segments follow: residues 245-266 (FILQ…SFWI), 270-292 (ASAA…NTHL), and 304-326 (AIDM…YALV). Topologically, residues 327 to 451 (NYIFFGRGPQ…DLTDVNAIDR (125 aa)) are cytoplasmic. Tyrosine 403 carries the post-translational modification Phosphotyrosine. Residues 452–473 (WSRIFFPVVFSFFNIVYWLYYV) form a helical membrane-spanning segment.

The protein belongs to the ligand-gated ion channel (TC 1.A.9) family. Gamma-aminobutyric acid receptor (TC 1.A.9.5) subfamily. GABRB2 sub-subfamily. Heteropentamer, formed by a combination of alpha (GABRA1-6), beta (GABRB1-3), gamma (GABRG1-3), delta (GABRD), epsilon (GABRE), rho (GABRR1-3), pi (GABRP) and theta (GABRQ) chains, each subunit exhibiting distinct physiological and pharmacological properties. Interacts with UBQLN1. May interact with KIF21B. Identified in a complex of 720 kDa composed of LHFPL4, NLGN2, GABRA1, GABRB2, GABRG2 and GABRB3. Glycosylated. As to expression, expressed in brain (at protein level), in cerebellar granule cells. Expressed in lungs, in alveolar epithelium.

It is found in the postsynaptic cell membrane. The protein localises to the cell membrane. The protein resides in the cytoplasmic vesicle membrane. The enzyme catalyses chloride(in) = chloride(out). Allosterically activated by benzodiazepines and the anesthetic etomidate. Inhibited by the antagonist bicuculline. Potentiated by histamine. Beta subunit of the heteropentameric ligand-gated chloride channel gated by gamma-aminobutyric acid (GABA), a major inhibitory neurotransmitter in the brain. GABA-gated chloride channels, also named GABA(A) receptors (GABAAR), consist of five subunits arranged around a central pore and contain GABA active binding site(s) located at the alpha and beta subunit interface(s). When activated by GABA, GABAARs selectively allow the flow of chloride anions across the cell membrane down their electrochemical gradient. Chloride influx into the postsynaptic neuron following GABAAR opening decreases the neuron ability to generate a new action potential, thereby reducing nerve transmission. GABAARs containing alpha-1 and beta-2 or -3 subunits exhibit synaptogenic activity; the gamma-2 subunit being necessary but not sufficient to induce rapid synaptic contacts formation. Extrasynaptic beta-2 receptors contribute to the tonic GABAergic inhibition. Beta-containing GABAARs can simultaneously bind GABA and histamine where histamine binds at the interface of two neighboring beta subunits, which may be involved in the regulation of sleep and wakefulness. This chain is Gamma-aminobutyric acid receptor subunit beta-2, found in Rattus norvegicus (Rat).